We begin with the raw amino-acid sequence, 3574 residues long: Chromatin structure-remodeling complex protein SYD (3574 aa).

3 disordered regions span residues 76-105 (SCLPHPGGTQTEDSGSAHLAGSSQAVGVSN), 123-211 (TSGR…KIDD), and 328-372 (DPKG…TERS). Composition is skewed to polar residues over residues 124 to 148 (SGRQLGGSNSASQTFYQGSGTQSNR) and 155 to 168 (PSNLDSTSGISQPH). Over residues 169–181 (NRSETMNQRDVKS) the composition is skewed to basic and acidic residues. The segment covering 194–204 (WDQNMDNSQIF) has biased composition (polar residues). The segment covering 358–372 (RLDEMDFSSKETERS) has biased composition (basic and acidic residues). One can recognise an HSA domain in the interval 573–647 (QKMKEERQRR…QREKINLLKI (75 aa)). A Helicase ATP-binding domain is found at 766–933 (VSLYNNHLNG…WALLNFLLPN (168 aa)). Residue 779–786 (DEMGLGKT) coordinates ATP. The DEAH box motif lies at 884-887 (DEGH). The Helicase C-terminal domain maps to 1077–1223 (MLDRMLPKLK…KLGVANQSIT (147 aa)). A Nuclear localization signal motif is present at residues 1266-1273 (ARRESEID). Disordered stretches follow at residues 1342–1472 (KRKD…VSRT), 1500–1575 (HPTS…SDAE), 1588–1637 (IVSR…SGSH), 1690–1811 (GPVQ…QIEV), 1830–1868 (QPHFSQSVAPDIHSSGSLSQEIRRDTSGTGGSARKQTAD), 2040–2068 (SSLSYVRSEPTASASTTAEPLPTDKLEKN), 2089–2115 (SSEEQTNVNSKIETNSEELQASRTDEV), 2143–2162 (SSMLEPDELPNAGQKGHSSI), 2179–2220 (LDDK…QMED), 2235–2338 (EEKE…DTND), 2350–2451 (EEKE…HMED), 2517–2538 (FESETHARTDSGGIDRGNEVSE), 2684–2703 (SEEIQSPSILPDDVPGQPDD), 2718–2759 (IDIG…RDSR), 2865–2884 (DTEKSKEPGTESADVSLHQL), 3017–3045 (EGTDFSSSLPKTEEENAKSQLADTEPSSS), 3189–3208 (NADSQLANIEPSSSPSVVEK), 3316–3337 (VDDSTGCSSEPQVQLPPSAEPM), and 3512–3574 (TEDT…NEDV). Positions 1362 to 1371 (AREVRSYEEK) are enriched in basic and acidic residues. Composition is skewed to polar residues over residues 1399–1426 (SLANDTSNIPVENSSDTLLPTSPTQAIT) and 1500–1511 (HPTSSLALTSPD). The span at 1532 to 1546 (GRGRGRSRGRGAGRG) shows a compositional bias: basic residues. 2 stretches are compositionally biased toward polar residues: residues 1555–1571 (GSNSSITQRTETATSLA) and 1597–1614 (EGSTSNPDQVSPVHSATT). The span at 1617 to 1627 (RSDKAADKDLD) shows a compositional bias: basic and acidic residues. Polar residues-rich tracts occupy residues 1690–1699 (GPVQNQNAVS), 1706–1752 (KSPS…STVE), 1796–1806 (DASSARSTGLT), 1832–1849 (HFSQSVAPDIHSSGSLSQ), 2040–2057 (SSLSYVRSEPTASASTTA), and 2090–2110 (SEEQTNVNSKIETNSEELQAS). The span at 2248-2260 (DDADTEQDPEESV) shows a compositional bias: acidic residues. Residues 2438 to 2451 (DRPKDGTADTHMED) show a composition bias toward basic and acidic residues. A compositionally biased stretch (polar residues) spans 2718 to 2735 (IDIGITSGKTCQPSSSTQ). 2 stretches are compositionally biased toward polar residues: residues 3034 to 3045 (KSQLADTEPSSS) and 3191 to 3204 (DSQLANIEPSSSPS). The segment covering 3523 to 3538 (KTEEKDAENPSDRLDG) has biased composition (basic and acidic residues).

Belongs to the SNF2/RAD54 helicase family. As to quaternary structure, interacts with LFY. Binds to BARD1/ROW1. Phosphorylated. As to expression, mostly expressed in rapidly dividing cells in the vegetative, inflorescence, and root meristems, as well as in young leaf and flower primordia. Isoform 1 is predominantly found in seedlings whereas isoform 2 is present in both seedlings and inflorescences (at protein level).

The protein resides in the cytoplasm. It localises to the nucleus. Its function is as follows. Catalytic component of the chromatin structure-remodeling complex (RSC), which is involved in transcription regulation and nucleosome positioning. Controls stem cell fate via the transcription regulation of WUS in the shoot apical meristem, by modulating its promoter. LFY-dependent repressor of the meristem identity switch from vegetative to reproductive development probably by modulating chromatin state. Involved in the regulation of floral homeotic gene expression in response to environmental stimuli. Required for carpel and ovule development, and for cotyledon separation via the regulation of CUC2 transcription. Regulates the promoters of several genes downstream of the jasmonate (JA) and ethylene (ET) signaling pathways. Required for resistance against the necrotrophic pathogen B.cinerea but not the biotrophic pathogen P.syringae. The polypeptide is Chromatin structure-remodeling complex protein SYD (SYD) (Arabidopsis thaliana (Mouse-ear cress)).